Reading from the N-terminus, the 747-residue chain is Cysteine--tRNA ligase, cytoplasmic (747 aa).

The segment at 1–26 (MTESWEQGKGRRTQPPWSAPNTNEQP) is disordered. Over residues 15–25 (PPWSAPNTNEQ) the composition is skewed to polar residues. Cys54 contacts Zn(2+). An L-cysteine-binding site is contributed by Gly55. Residues 56–66 (PTVYDASHMGH) carry the 'HIGH' region motif. Thr95 serves as a coordination point for L-cysteine. A 'KIIK' region motif is present at residues 100–103 (KIIK). Zn(2+)-binding residues include Cys347, His372, and Glu376. An L-cysteine-binding site is contributed by His372. The short motif at 405 to 409 (KMSKS) is the 'KMSKS' region element. Lys408 provides a ligand contact to ATP. Positions 651 to 683 (EEKRKAEEEKQRKKEEAARKKQQQEAAKLEKMK) are enriched in basic and acidic residues. 2 disordered regions span residues 651–685 (EEKR…MKIS) and 700–721 (FDES…GQTK).

It belongs to the class-I aminoacyl-tRNA synthetase family. In terms of assembly, homodimer. Requires Zn(2+) as cofactor.

It is found in the cytoplasm. The enzyme catalyses tRNA(Cys) + L-cysteine + ATP = L-cysteinyl-tRNA(Cys) + AMP + diphosphate. In terms of biological role, catalyzes the ATP-dependent ligation of cysteine to tRNA(Cys). The polypeptide is Cysteine--tRNA ligase, cytoplasmic (cars1) (Xenopus laevis (African clawed frog)).